Here is a 576-residue protein sequence, read N- to C-terminus: G protein-coupled receptor kinase 6 (576 aa).

Residues 1 to 185 (MELENIVANT…LERQPVTKNT (185 aa)) are N-terminal. The 119-residue stretch at 53 to 171 (YHSLCERQPI…LDSIYFNRFL (119 aa)) folds into the RGS domain. In terms of domain architecture, Protein kinase spans 186–448 (FRQYRVLGKG…AREVKEHPLF (263 aa)). ATP contacts are provided by residues 192 to 200 (LGKGGFGEV), Lys-215, and 264 to 270 (TLMNGGD). Residue Asp-311 is the Proton acceptor of the active site. 315 to 318 (ENIL) is a binding site for ATP. The AGC-kinase C-terminal domain maps to 449–514 (KKLNFKRLGA…GSVSIPWQNE (66 aa)). Ser-484 bears the Phosphoserine; by autocatalysis mark. Thr-485 is modified (phosphothreonine; by autocatalysis). Residues Cys-561, Cys-562, and Cys-565 are each lipidated (S-palmitoyl cysteine). 2 positions are modified to phosphoserine: Ser-566 and Ser-568.

This sequence belongs to the protein kinase superfamily. AGC Ser/Thr protein kinase family. GPRK subfamily. Interacts with GIT1. As to expression, widely expressed. Detectable in all brain areas examined.

It is found in the membrane. The enzyme catalyses [G-protein-coupled receptor] + ATP = [G-protein-coupled receptor]-phosphate + ADP + H(+). In terms of biological role, specifically phosphorylates the activated forms of G protein-coupled receptors. Such receptor phosphorylation initiates beta-arrestin-mediated receptor desensitization, internalization, and signaling events leading to their desensitization. Seems to be involved in the desensitization of D2-like dopamine receptors in striatum and chemokine receptor CXCR4 which is critical for CXCL12-induced cell chemotaxis. Phosphorylates rhodopsin (RHO) (in vitro) and a non G-protein-coupled receptor: LRP6 during Wnt signaling (in vitro). This is G protein-coupled receptor kinase 6 (Grk6) from Rattus norvegicus (Rat).